Reading from the N-terminus, the 228-residue chain is uncharacterized protein (228 aa).

A disordered region spans residues 1–34; the sequence is MPRDTKPYSRPANAPRPGVKTERSNQFKAASTKY.

This is an uncharacterized protein from Orgyia pseudotsugata (Douglas-fir tussock moth).